We begin with the raw amino-acid sequence, 105 residues long: Flowering-promoting factor 1-like protein 5 (105 aa).

Belongs to the FPF1 family.

This is Flowering-promoting factor 1-like protein 5 from Oryza sativa subsp. japonica (Rice).